The chain runs to 248 residues: Methionine aminopeptidase (248 aa).

H77 lines the substrate pocket. A divalent metal cation contacts are provided by D94, D105, and H169. H176 provides a ligand contact to substrate. Residues E202 and E233 each coordinate a divalent metal cation.

This sequence belongs to the peptidase M24A family. Methionine aminopeptidase type 1 subfamily. Monomer. Co(2+) serves as cofactor. It depends on Zn(2+) as a cofactor. Mn(2+) is required as a cofactor. Requires Fe(2+) as cofactor.

It catalyses the reaction Release of N-terminal amino acids, preferentially methionine, from peptides and arylamides.. Removes the N-terminal methionine from nascent proteins. The N-terminal methionine is often cleaved when the second residue in the primary sequence is small and uncharged (Met-Ala-, Cys, Gly, Pro, Ser, Thr, or Val). Requires deformylation of the N(alpha)-formylated initiator methionine before it can be hydrolyzed. The protein is Methionine aminopeptidase of Mycoplasma genitalium (strain ATCC 33530 / DSM 19775 / NCTC 10195 / G37) (Mycoplasmoides genitalium).